The primary structure comprises 107 residues: Anti-adapter protein IraM (107 aa).

It belongs to the IraM/RssC family.

The protein localises to the cytoplasm. Its function is as follows. Inhibits RpoS proteolysis by regulating RssB activity, thereby increasing the stability of the sigma stress factor RpoS during magnesium starvation. The polypeptide is Anti-adapter protein IraM (Shigella sonnei (strain Ss046)).